The sequence spans 134 residues: Lymphocyte antigen 6S (134 aa).

The signal sequence occupies residues 1 to 26 (MSSLQAMKTLSLVLLVALLSMERAQG). A UPAR/Ly6 domain is found at 28–76 (RCYRCLAVLEGASCSVVSCPFLDGVCVSQKVSVFGSKVRGENKLSLLSC). 4 disulfide bridges follow: Cys-29–Cys-53, Cys-32–Cys-41, Cys-76–Cys-98, and Cys-99–Cys-104. A lipid anchor (GPI-anchor amidated asparagine) is attached at Asn-105. A propeptide spans 106-134 (AVVLAASSPWALCVQLLLSLGSVFLWALL) (removed in mature form).

The protein localises to the cell membrane. The protein is Lymphocyte antigen 6S of Homo sapiens (Human).